The chain runs to 257 residues: Hydroxyacylglutathione hydrolase (257 aa).

Residues His-54, His-56, Asp-58, His-59, His-113, Asp-137, and His-175 each contribute to the Zn(2+) site.

This sequence belongs to the metallo-beta-lactamase superfamily. Glyoxalase II family. As to quaternary structure, monomer. Zn(2+) is required as a cofactor.

It carries out the reaction an S-(2-hydroxyacyl)glutathione + H2O = a 2-hydroxy carboxylate + glutathione + H(+). The protein operates within secondary metabolite metabolism; methylglyoxal degradation; (R)-lactate from methylglyoxal: step 2/2. In terms of biological role, thiolesterase that catalyzes the hydrolysis of S-D-lactoyl-glutathione to form glutathione and D-lactic acid. The protein is Hydroxyacylglutathione hydrolase of Nostoc sp. (strain PCC 7120 / SAG 25.82 / UTEX 2576).